A 141-amino-acid chain; its full sequence is Photosystem I reaction center subunit IV A, chloroplastic (141 aa).

A chloroplast-targeting transit peptide spans 1 to 49 (MASCNMASAASNFLVATPNVASNTNTSRTTMLFFSSKNYGSTAPRLVVR). The span at 57 to 73 (PAAAATAEPAEAPVKAA) shows a compositional bias: low complexity. Positions 57 to 83 (PAAAATAEPAEAPVKAAKPPPIGPKRG) are disordered.

It belongs to the PsaE family. In terms of processing, 2 isoforms exists (ratio 1:1). With or without the N-terminal alanine.

The protein resides in the plastid. Its subcellular location is the chloroplast thylakoid membrane. In terms of biological role, stabilizes the interaction between PsaC and the PSI core, assists the docking of the ferredoxin to PSI and interacts with ferredoxin-NADP oxidoreductase. The polypeptide is Photosystem I reaction center subunit IV A, chloroplastic (PSAEA) (Nicotiana sylvestris (Wood tobacco)).